A 166-amino-acid chain; its full sequence is Regulatory protein RecX (166 aa).

Belongs to the RecX family.

Its subcellular location is the cytoplasm. In terms of biological role, modulates RecA activity. This is Regulatory protein RecX from Salmonella agona (strain SL483).